The primary structure comprises 341 residues: Uroporphyrinogen decarboxylase (341 aa).

Residues 26–30 (RQAGR), Asp75, Tyr150, Ser205, and His318 contribute to the substrate site.

The protein belongs to the uroporphyrinogen decarboxylase family. As to quaternary structure, homodimer.

The protein localises to the cytoplasm. The enzyme catalyses uroporphyrinogen III + 4 H(+) = coproporphyrinogen III + 4 CO2. It participates in porphyrin-containing compound metabolism; protoporphyrin-IX biosynthesis; coproporphyrinogen-III from 5-aminolevulinate: step 4/4. In terms of biological role, catalyzes the decarboxylation of four acetate groups of uroporphyrinogen-III to yield coproporphyrinogen-III. The sequence is that of Uroporphyrinogen decarboxylase from Thermus thermophilus (strain ATCC 27634 / DSM 579 / HB8).